Here is a 314-residue protein sequence, read N- to C-terminus: Putative S-adenosyl-L-methionine-dependent methyltransferase MUL_4402 (314 aa).

S-adenosyl-L-methionine is bound by residues Asp132 and 161–162 (DL). The segment at 291–314 (RPVPDDAEGPVPPTLFVSAHRPAA) is disordered.

The protein belongs to the UPF0677 family.

Its function is as follows. Exhibits S-adenosyl-L-methionine-dependent methyltransferase activity. This Mycobacterium ulcerans (strain Agy99) protein is Putative S-adenosyl-L-methionine-dependent methyltransferase MUL_4402.